The primary structure comprises 334 residues: Glycerol-3-phosphate dehydrogenase [NAD(P)+] (334 aa).

Trp13, Arg33, and Lys106 together coordinate NADPH. The sn-glycerol 3-phosphate site is built by Lys106, Gly137, and Ser139. An NADPH-binding site is contributed by Ala141. Residues Lys192, Asp245, Ser255, Arg256, and Asn257 each contribute to the sn-glycerol 3-phosphate site. The Proton acceptor role is filled by Lys192. NADPH is bound at residue Arg256. Residues Val280 and Glu282 each contribute to the NADPH site.

This sequence belongs to the NAD-dependent glycerol-3-phosphate dehydrogenase family.

It is found in the cytoplasm. It carries out the reaction sn-glycerol 3-phosphate + NAD(+) = dihydroxyacetone phosphate + NADH + H(+). The catalysed reaction is sn-glycerol 3-phosphate + NADP(+) = dihydroxyacetone phosphate + NADPH + H(+). It functions in the pathway membrane lipid metabolism; glycerophospholipid metabolism. In terms of biological role, catalyzes the reduction of the glycolytic intermediate dihydroxyacetone phosphate (DHAP) to sn-glycerol 3-phosphate (G3P), the key precursor for phospholipid synthesis. This chain is Glycerol-3-phosphate dehydrogenase [NAD(P)+], found in Chlamydia caviae (strain ATCC VR-813 / DSM 19441 / 03DC25 / GPIC) (Chlamydophila caviae).